Consider the following 368-residue polypeptide: Cytochrome b-c1 complex subunit 2, mitochondrial (368 aa).

The N-terminal 16 residues, 1 to 16, are a transit peptide targeting the mitochondrion; sequence MLSAARLQFAQGSVRR. S141 and S168 each carry phosphoserine.

This sequence belongs to the peptidase M16 family. UQCRC2/QCR2 subfamily. In terms of assembly, component of the ubiquinol-cytochrome c oxidoreductase (cytochrome b-c1 complex, complex III, CIII), a multisubunit enzyme composed of 10 subunits. The complex is composed of 3 respiratory subunits cytochrome b (COB), cytochrome c1 (CYT1) and Rieske protein (RIP1), 2 core protein subunits COR1 and QCR2, and 5 low-molecular weight protein subunits QCR6, QCR7, QCR8, QCR9 and QCR10. The complex exists as an obligatory dimer and forms supercomplexes (SCs) in the inner mitochondrial membrane with a monomer or a dimer of cytochrome c oxidase (complex IV, CIV), resulting in 2 different assemblies (supercomplexes III(2)IV and III(2)IV(2)).

The protein localises to the mitochondrion inner membrane. In terms of biological role, component of the ubiquinol-cytochrome c oxidoreductase, a multisubunit transmembrane complex that is part of the mitochondrial electron transport chain which drives oxidative phosphorylation. The respiratory chain contains 3 multisubunit complexes succinate dehydrogenase (complex II, CII), ubiquinol-cytochrome c oxidoreductase (cytochrome b-c1 complex, complex III, CIII) and cytochrome c oxidase (complex IV, CIV), that cooperate to transfer electrons derived from NADH and succinate to molecular oxygen, creating an electrochemical gradient over the inner membrane that drives transmembrane transport and the ATP synthase. The cytochrome b-c1 complex catalyzes electron transfer from ubiquinol to cytochrome c, linking this redox reaction to translocation of protons across the mitochondrial inner membrane, with protons being carried across the membrane as hydrogens on the quinol. In the process called Q cycle, 2 protons are consumed from the matrix, 4 protons are released into the intermembrane space and 2 electrons are passed to cytochrome c. This chain is Cytochrome b-c1 complex subunit 2, mitochondrial (QCR2), found in Saccharomyces cerevisiae (strain ATCC 204508 / S288c) (Baker's yeast).